The sequence spans 60 residues: Cytotoxin 5 (60 aa).

4 disulfide bridges follow: Cys-3/Cys-21, Cys-14/Cys-38, Cys-42/Cys-53, and Cys-54/Cys-59.

This sequence belongs to the three-finger toxin family. Short-chain subfamily. Type IA cytotoxin sub-subfamily. In terms of assembly, monomer in solution; Homodimer and oligomer in the presence of negatively charged lipids forming a pore with a size ranging between 20 and 30 Angstroms. Expressed by the venom gland.

The protein resides in the secreted. The protein localises to the target cell membrane. In terms of biological role, shows cytolytic activity on many different cells by forming pore in lipid membranes. In vivo, increases heart rate or kills the animal by cardiac arrest. In addition, it binds to heparin with high affinity, interacts with Kv channel-interacting protein 1 (KCNIP1) in a calcium-independent manner, and binds to integrin alpha-V/beta-3 (ITGAV/ITGB3) with moderate affinity. This chain is Cytotoxin 5, found in Naja mossambica (Mozambique spitting cobra).